Reading from the N-terminus, the 302-residue chain is tRNA dimethylallyltransferase (302 aa).

G10 to T17 lines the ATP pocket. A substrate-binding site is contributed by T12 to T17. Residues D35–Q38 are interaction with substrate tRNA.

This sequence belongs to the IPP transferase family. In terms of assembly, monomer. It depends on Mg(2+) as a cofactor.

It carries out the reaction adenosine(37) in tRNA + dimethylallyl diphosphate = N(6)-dimethylallyladenosine(37) in tRNA + diphosphate. Its function is as follows. Catalyzes the transfer of a dimethylallyl group onto the adenine at position 37 in tRNAs that read codons beginning with uridine, leading to the formation of N6-(dimethylallyl)adenosine (i(6)A). This Christiangramia forsetii (strain DSM 17595 / CGMCC 1.15422 / KT0803) (Gramella forsetii) protein is tRNA dimethylallyltransferase.